The sequence spans 664 residues: Cyclic nucleotide-gated channel alpha-2 (664 aa).

Residues 1-10 (MMTEKSNGVK) are compositionally biased toward polar residues. Positions 1–61 (MMTEKSNGVK…LQRLAEMDTP (61 aa)) are disordered. Residues 1–146 (MMTEKSNGVK…PAGDWYYRWL (146 aa)) lie on the Cytoplasmic side of the membrane. The helical transmembrane segment at 147 to 168 (FVIAMPVLYNWCLLVARACFSD) threads the bilayer. Over 169-178 (LQRNYFVVWL) the chain is Extracellular. Residues 179-199 (VLDYFSDTVYIADLIIRLRTG) form a helical membrane-spanning segment. The Cytoplasmic segment spans residues 200 to 224 (FLEQGLLVKDPKKLRDNYIHTLQFK). A helical membrane pass occupies residues 225-243 (LDVASIIPTDLIYFAVGIH). Residues 244–248 (SPEVR) lie on the Extracellular side of the membrane. Residues 249–267 (FNRLLHFARMFEFFDRTET) form a helical membrane-spanning segment. Residues 268 to 274 (RTSYPNI) are Cytoplasmic-facing. An ion conduction pathway region spans residues 272–380 (PNIFRISNLV…GNVGSMISNM (109 aa)). Residues 275–298 (FRISNLVLYILVIIHWNACIYYAI) traverse the membrane as a helical segment. Residues 299–321 (SKSIGFGVDTWVYPNITDPEYGY) lie on the Extracellular side of the membrane. The next 2 helical transmembrane spans lie at 322 to 356 (LARE…LFVI) and 357 to 381 (FDFL…SNMN). The segment at 339–342 (TIGE) is selectivity filter. The tract at residues 382 to 458 (ATRAEFQAKI…STLKKVRIFQ (77 aa)) is C-linker. Residues 382–664 (ATRAEFQAKI…INTPEPAVAE (283 aa)) are Cytoplasmic-facing. The cyclic nucleotide-binding domain stretch occupies residues 462–582 (AGLLVELVLK…EERGREILMK (121 aa)). 3',5'-cyclic GMP-binding residues include glycine 522, serine 525, arginine 538, and threonine 539. The 3',5'-cyclic AMP site is built by arginine 538 and threonine 539. Residues 599–653 (VQEKLEQLETNMETLYTRFARLLAEYTGAQQKLKQRITVLETKMKQNHEDDYLSD) adopt a coiled-coil conformation.

The protein belongs to the cyclic nucleotide-gated cation channel (TC 1.A.1.5) family. CNGA2 subfamily. As to quaternary structure, the olfactory cyclic nucleotide-gated channel is an heterotetramer composed of CNGA2, CNGA4 and CNGB1b subunits with 2:1:1 stoichiometry.

It localises to the cell projection. The protein resides in the cilium membrane. The catalysed reaction is Ca(2+)(in) = Ca(2+)(out). It carries out the reaction Na(+)(in) = Na(+)(out). The enzyme catalyses K(+)(in) = K(+)(out). It catalyses the reaction NH4(+)(in) = NH4(+)(out). The catalysed reaction is Rb(+)(in) = Rb(+)(out). It carries out the reaction Li(+)(in) = Li(+)(out). The enzyme catalyses Cs(+)(in) = Cs(+)(out). Functionally, pore-forming subunit of the olfactory cyclic nucleotide-gated channel. Operates in the cilia of olfactory sensory neurons where chemical stimulation of the odorant is converted to an electrical signal. Mediates odorant-induced cAMP-dependent Ca(2+) influx triggering neuron depolarization. The rise of intracellular Ca(2+) levels potentiates the olfactory response by activating Ca(2+)-dependent Cl(-) channels, but it also serves as a negative feedback signal to desensitize the channel for rapid adaptation to odorants. Conducts cAMP- and cGMP-gated ion currents, with permeability for monovalent and divalent cations. The sequence is that of Cyclic nucleotide-gated channel alpha-2 from Mus musculus (Mouse).